A 122-amino-acid chain; its full sequence is uncharacterized protein (122 aa).

It localises to the plastid. This is an uncharacterized protein from Euglena longa (Euglenophycean alga).